The sequence spans 501 residues: Protein YLS7 (501 aa).

The chain crosses the membrane as a helical; Signal-anchor for type II membrane protein span at residues 25-45; sequence IAFAIGGLTSFVIFASLLLFT. Residues 69–131 form a disordered region; sequence HSIHDPDRNP…NVSIDEEATQ (63 aa). Positions 78–89 are enriched in low complexity; sequence PSPVSSSESPPV. Positions 94 to 113 are enriched in basic and acidic residues; the sequence is SDDKVLPKGSHDSNDVRLGE. The segment covering 114–124 has biased composition (polar residues); it reads ETNSGKSSNVS. The short motif at 211–213 is the GDS motif element; that stretch reads GDS. Residues 438-467 are disordered; that stretch reads RHDGHPGPYRSPDPKKITKRGPDGQPPPQD. Residues 449–459 are compositionally biased toward basic and acidic residues; that stretch reads PDPKKITKRGP. The short motif at 467–481 is the DCXHWCLPGXXDXWN motif element; the sequence is DCLHWCMPGPVDTWN.

Belongs to the PC-esterase family. TBL subfamily. Expressed in roots, cauline leaves and flowers.

The protein resides in the membrane. Functionally, may act as a bridging protein that binds pectin and other cell wall polysaccharides. Probably involved in maintaining esterification of pectins. May be involved in the specific O-acetylation of cell wall polymers. This is Protein YLS7 (YLS7) from Arabidopsis thaliana (Mouse-ear cress).